A 98-amino-acid chain; its full sequence is NADH-ubiquinone oxidoreductase chain 4L (98 aa).

3 consecutive transmembrane segments (helical) span residues 1–21 (MSSI…GLLM), 29–49 (SLLC…VTML), and 61–81 (VMLM…LVTV).

This sequence belongs to the complex I subunit 4L family. As to quaternary structure, core subunit of respiratory chain NADH dehydrogenase (Complex I) which is composed of 45 different subunits.

It localises to the mitochondrion inner membrane. The catalysed reaction is a ubiquinone + NADH + 5 H(+)(in) = a ubiquinol + NAD(+) + 4 H(+)(out). Its function is as follows. Core subunit of the mitochondrial membrane respiratory chain NADH dehydrogenase (Complex I) which catalyzes electron transfer from NADH through the respiratory chain, using ubiquinone as an electron acceptor. Part of the enzyme membrane arm which is embedded in the lipid bilayer and involved in proton translocation. The protein is NADH-ubiquinone oxidoreductase chain 4L (MT-ND4L) of Tamandua tetradactyla (Southern anteater).